The primary structure comprises 200 residues: Small ribosomal subunit protein eS8B (200 aa).

A disordered region spans residues 1 to 41; it reads MGITRDSRHKRSATGAKRAQYRKKRKFELGRQPSNTRIGPK. Phosphoserine occurs at positions 62 and 99. Positions 124–145 are disordered; that stretch reads KGKKATATPTPKSKHVQRKHSA. Residues 135-145 show a composition bias toward basic residues; it reads KSKHVQRKHSA. Residues Ser150, Ser154, and Ser171 each carry the phosphoserine modification.

The protein belongs to the eukaryotic ribosomal protein eS8 family. As to quaternary structure, component of the small ribosomal subunit (SSU). Mature yeast ribosomes consist of a small (40S) and a large (60S) subunit. The 40S small subunit contains 1 molecule of ribosomal RNA (18S rRNA) and at least 33 different proteins. The large 60S subunit contains 3 rRNA molecules (25S, 5.8S and 5S rRNA) and at least 46 different proteins.

The protein resides in the cytoplasm. Functionally, component of the ribosome, a large ribonucleoprotein complex responsible for the synthesis of proteins in the cell. The small ribosomal subunit (SSU) binds messenger RNAs (mRNAs) and translates the encoded message by selecting cognate aminoacyl-transfer RNA (tRNA) molecules. The large subunit (LSU) contains the ribosomal catalytic site termed the peptidyl transferase center (PTC), which catalyzes the formation of peptide bonds, thereby polymerizing the amino acids delivered by tRNAs into a polypeptide chain. The nascent polypeptides leave the ribosome through a tunnel in the LSU and interact with protein factors that function in enzymatic processing, targeting, and the membrane insertion of nascent chains at the exit of the ribosomal tunnel. The protein is Small ribosomal subunit protein eS8B (rps802) of Schizosaccharomyces pombe (strain 972 / ATCC 24843) (Fission yeast).